The chain runs to 227 residues: Cytochrome c oxidase subunit 2 (227 aa).

Residues 1 to 14 (MAYPFQLGLQDATS) are Mitochondrial intermembrane-facing. Residues 15–45 (PIMEELLHFHDHALMIVFLISSLVLYIISLM) form a helical membrane-spanning segment. The Mitochondrial matrix segment spans residues 46–59 (LTTKLTHTSTMDAQ). A helical transmembrane segment spans residues 60-87 (EVETVWTILPAIILILIALPSLRILYMM). The Mitochondrial intermembrane portion of the chain corresponds to 88-227 (DEINNPSLTV…YFETWSALMV (140 aa)). Positions 161, 196, 198, 200, 204, and 207 each coordinate Cu cation. Glu-198 serves as a coordination point for Mg(2+). Tyr-218 is subject to Phosphotyrosine.

Belongs to the cytochrome c oxidase subunit 2 family. Component of the cytochrome c oxidase (complex IV, CIV), a multisubunit enzyme composed of 14 subunits. The complex is composed of a catalytic core of 3 subunits MT-CO1, MT-CO2 and MT-CO3, encoded in the mitochondrial DNA, and 11 supernumerary subunits COX4I, COX5A, COX5B, COX6A, COX6B, COX6C, COX7A, COX7B, COX7C, COX8 and NDUFA4, which are encoded in the nuclear genome. The complex exists as a monomer or a dimer and forms supercomplexes (SCs) in the inner mitochondrial membrane with NADH-ubiquinone oxidoreductase (complex I, CI) and ubiquinol-cytochrome c oxidoreductase (cytochrome b-c1 complex, complex III, CIII), resulting in different assemblies (supercomplex SCI(1)III(2)IV(1) and megacomplex MCI(2)III(2)IV(2)). Found in a complex with TMEM177, COA6, COX18, COX20, SCO1 and SCO2. Interacts with TMEM177 in a COX20-dependent manner. Interacts with COX20. Interacts with COX16. Cu cation is required as a cofactor.

It is found in the mitochondrion inner membrane. It carries out the reaction 4 Fe(II)-[cytochrome c] + O2 + 8 H(+)(in) = 4 Fe(III)-[cytochrome c] + 2 H2O + 4 H(+)(out). Functionally, component of the cytochrome c oxidase, the last enzyme in the mitochondrial electron transport chain which drives oxidative phosphorylation. The respiratory chain contains 3 multisubunit complexes succinate dehydrogenase (complex II, CII), ubiquinol-cytochrome c oxidoreductase (cytochrome b-c1 complex, complex III, CIII) and cytochrome c oxidase (complex IV, CIV), that cooperate to transfer electrons derived from NADH and succinate to molecular oxygen, creating an electrochemical gradient over the inner membrane that drives transmembrane transport and the ATP synthase. Cytochrome c oxidase is the component of the respiratory chain that catalyzes the reduction of oxygen to water. Electrons originating from reduced cytochrome c in the intermembrane space (IMS) are transferred via the dinuclear copper A center (CU(A)) of subunit 2 and heme A of subunit 1 to the active site in subunit 1, a binuclear center (BNC) formed by heme A3 and copper B (CU(B)). The BNC reduces molecular oxygen to 2 water molecules using 4 electrons from cytochrome c in the IMS and 4 protons from the mitochondrial matrix. The polypeptide is Cytochrome c oxidase subunit 2 (MT-CO2) (Canis aureus (Golden jackal)).